The chain runs to 153 residues: UPF0178 protein Ccel_2994 (153 aa).

Belongs to the UPF0178 family.

This is UPF0178 protein Ccel_2994 from Ruminiclostridium cellulolyticum (strain ATCC 35319 / DSM 5812 / JCM 6584 / H10) (Clostridium cellulolyticum).